A 391-amino-acid polypeptide reads, in one-letter code: MGYPEVERREPLPAAAPRERGSQGCGCRGAPARAGEGNSCRLFLGFFGLSLALHLLTLCCYLELRSELRRERGAESRFSGPGTPGTSGTLSSPGGLDPNGPITRHFGQRSPQQQPLEPGETTLPPDSQDGHQMALVNFFIPKEKSYSEEESRRVRRNKRSKSSEGADGPVKNKKKGKKAGPPGPNGPPGPPGPPGPQGPPGIPGIPGIPGTTVMGPPGPPGPPGPQGPPGLQGPSGAADKAGTRENQPAVVHLQGQGSAIQVKNDLSGGVLNDWSRITMNPKVFKLHPRSGELEVLVDGTYFIYSQVEVYYINFTDFASYEVVVDEKPFLQCTRSIETGKTNYNTCYTAGVCLLKARQKIAVKMVHADISINMSKHTTFFGAIRLGEAPAS.

The span at 1–21 (MGYPEVERREPLPAAAPRERG) shows a compositional bias: basic and acidic residues. A disordered region spans residues 1 to 28 (MGYPEVERREPLPAAAPRERGSQGCGCR). Residues 1-41 (MGYPEVERREPLPAAAPRERGSQGCGCRGAPARAGEGNSCR) lie on the Cytoplasmic side of the membrane. Residues 42–62 (LFLGFFGLSLALHLLTLCCYL) traverse the membrane as a helical; Signal-anchor for type II membrane protein segment. Topologically, residues 63–391 (ELRSELRRER…AIRLGEAPAS (329 aa)) are extracellular. Disordered regions lie at residues 73–130 (GAES…SQDG) and 145–245 (SYSE…GTRE). Residues 76–96 (SRFSGPGTPGTSGTLSSPGGL) are compositionally biased toward low complexity. Positions 180 to 229 (GPPGPNGPPGPPGPPGPQGPPGIPGIPGIPGTTVMGPPGPPGPPGPQGPP) constitute a Collagen-like domain. Composition is skewed to pro residues over residues 181–203 (PPGPNGPPGPPGPPGPQGPPGIP) and 216–228 (PPGPPGPPGPQGP). The THD domain occupies 249–385 (AVVHLQGQGS…HTTFFGAIRL (137 aa)). An N-linked (GlcNAc...) asparagine glycan is attached at N313. C332 and C346 are oxidised to a cystine. N372 carries an N-linked (GlcNAc...) asparagine glycan.

It belongs to the tumor necrosis factor family. Homotrimer. The homotrimers may then dimerize and form higher-order oligomers. N-glycosylated. Post-translationally, processing by furin produces a secreted form.

Its subcellular location is the cell membrane. The protein localises to the secreted. Its function is as follows. Cytokine which is involved in epithelial-mesenchymal signaling during morphogenesis of ectodermal organs. Functions as a ligand activating the DEATH-domain containing receptors EDAR and EDA2R. Isoform A1 binds only to the receptor EDAR, while isoform A2 binds exclusively to the receptor EDA2R. May also play a role in cell adhesion. In terms of biological role, isoform A1 binds only to the receptor EDAR, while isoform A2 binds exclusively to the receptor EDA2R. Functionally, isoform A2 binds exclusively to the receptor EDA2R. This is Ectodysplasin-A (EDA) from Bos taurus (Bovine).